The primary structure comprises 417 residues: Lipoyl synthase, mitochondrial (417 aa).

The N-terminal 26 residues, 1 to 26 (MAVCARGLRCLGTPAVSLRLAASRSY), are a transit peptide targeting the mitochondrion. The tract at residues 27–61 (ATTTPPDPAIPNTPGAAATSSPAKRPRTSFQDKLN) is disordered. Polar residues predominate over residues 44–58 (ATSSPAKRPRTSFQD). Cys134, Cys139, Cys145, Cys165, Cys169, Cys172, and Ser380 together coordinate [4Fe-4S] cluster. In terms of domain architecture, Radical SAM core spans 148 to 369 (GGSKSAATAT…KEKALEMGFL (222 aa)). Residues 398–417 (ESTGPGSASVQDVATGDLVR) form a disordered region.

This sequence belongs to the radical SAM superfamily. Lipoyl synthase family. [4Fe-4S] cluster serves as cofactor.

The protein localises to the mitochondrion. It carries out the reaction [[Fe-S] cluster scaffold protein carrying a second [4Fe-4S](2+) cluster] + N(6)-octanoyl-L-lysyl-[protein] + 2 oxidized [2Fe-2S]-[ferredoxin] + 2 S-adenosyl-L-methionine + 4 H(+) = [[Fe-S] cluster scaffold protein] + N(6)-[(R)-dihydrolipoyl]-L-lysyl-[protein] + 4 Fe(3+) + 2 hydrogen sulfide + 2 5'-deoxyadenosine + 2 L-methionine + 2 reduced [2Fe-2S]-[ferredoxin]. The protein operates within protein modification; protein lipoylation via endogenous pathway; protein N(6)-(lipoyl)lysine from octanoyl-[acyl-carrier-protein]: step 2/2. Its function is as follows. Catalyzes the radical-mediated insertion of two sulfur atoms into the C-6 and C-8 positions of the octanoyl moiety bound to the lipoyl domains of lipoate-dependent enzymes, thereby converting the octanoylated domains into lipoylated derivatives. This Uncinocarpus reesii (strain UAMH 1704) protein is Lipoyl synthase, mitochondrial.